Reading from the N-terminus, the 427-residue chain is Trigger factor (427 aa).

One can recognise a PPIase FKBP-type domain in the interval G163–P248.

Belongs to the FKBP-type PPIase family. Tig subfamily.

The protein localises to the cytoplasm. The enzyme catalyses [protein]-peptidylproline (omega=180) = [protein]-peptidylproline (omega=0). Its function is as follows. Involved in protein export. Acts as a chaperone by maintaining the newly synthesized protein in an open conformation. Functions as a peptidyl-prolyl cis-trans isomerase. The chain is Trigger factor from Listeria monocytogenes serotype 4a (strain HCC23).